Here is a 128-residue protein sequence, read N- to C-terminus: Small ribosomal subunit protein eS8 (128 aa).

This sequence belongs to the eukaryotic ribosomal protein eS8 family. In terms of assembly, part of the 30S ribosomal subunit.

The sequence is that of Small ribosomal subunit protein eS8 from Methanococcus aeolicus (strain ATCC BAA-1280 / DSM 17508 / OCM 812 / Nankai-3).